We begin with the raw amino-acid sequence, 458 residues long: Plant UBX domain-containing protein 2 (458 aa).

A disordered region spans residues 1–103 (MDDVKDKLKG…APQDGFDPYG (103 aa)). Over residues 44 to 54 (PIQNRFNSSQA) the composition is skewed to polar residues. Residues 56–70 (NPTPRPKPNPNPLPE) show a composition bias toward pro residues. The segment covering 74 to 85 (SSSDQKISGSTR) has biased composition (polar residues). The C2H2-type; atypical zinc-finger motif lies at 121 to 143 (FECPICKNPFTSEEEVSVHVESC). A PUB domain is found at 181–248 (SSIDVLLRLF…EIWAVMDVPS (68 aa)). The UBX domain occupies 349–433 (KRYKRSMIRV…ELVPSALIRF (85 aa)).

As to quaternary structure, interacts with CDC48A in vitro and co-fractionates with membrane-associated but not soluble CDC48A in vivo.

The protein localises to the membrane. Its function is as follows. Facilitates the interaction of SYP31 and CDC48A, thereby regulating an CDC48A membrane-associated function. Appears to act as a negative regulator mediating the powdery mildew-plant interaction. In Arabidopsis thaliana (Mouse-ear cress), this protein is Plant UBX domain-containing protein 2.